The sequence spans 218 residues: 7-cyano-7-deazaguanine synthase (218 aa).

9–19 is an ATP binding site; that stretch reads FSGGMDSFTVL. Zn(2+) is bound by residues Cys-185, Cys-193, Cys-196, and Cys-199.

It belongs to the QueC family. Zn(2+) serves as cofactor.

The enzyme catalyses 7-carboxy-7-deazaguanine + NH4(+) + ATP = 7-cyano-7-deazaguanine + ADP + phosphate + H2O + H(+). Its pathway is purine metabolism; 7-cyano-7-deazaguanine biosynthesis. In terms of biological role, catalyzes the ATP-dependent conversion of 7-carboxy-7-deazaguanine (CDG) to 7-cyano-7-deazaguanine (preQ(0)). The polypeptide is 7-cyano-7-deazaguanine synthase (Pseudoalteromonas atlantica (strain T6c / ATCC BAA-1087)).